The primary structure comprises 52 residues: ATP synthase protein 8 (52 aa).

A helical transmembrane segment spans residues 6 to 26; the sequence is PINGFVILCSISLMLLTLLIN.

Belongs to the ATPase protein 8 family. F-type ATPases have 2 components, CF(1) - the catalytic core - and CF(0) - the membrane proton channel.

Its subcellular location is the mitochondrion membrane. Its function is as follows. Mitochondrial membrane ATP synthase (F(1)F(0) ATP synthase or Complex V) produces ATP from ADP in the presence of a proton gradient across the membrane which is generated by electron transport complexes of the respiratory chain. F-type ATPases consist of two structural domains, F(1) - containing the extramembraneous catalytic core and F(0) - containing the membrane proton channel, linked together by a central stalk and a peripheral stalk. During catalysis, ATP synthesis in the catalytic domain of F(1) is coupled via a rotary mechanism of the central stalk subunits to proton translocation. Part of the complex F(0) domain. Minor subunit located with subunit a in the membrane. The chain is ATP synthase protein 8 (MT-ATP8) from Albinaria turrita (Door snail).